Reading from the N-terminus, the 228-residue chain is Ribose-5-phosphate isomerase A (228 aa).

Substrate-binding positions include 32 to 35 (TGST), 85 to 88 (DGAD), and 98 to 101 (KGGG). Residue Glu-107 is the Proton acceptor of the active site. Lys-125 is a substrate binding site.

This sequence belongs to the ribose 5-phosphate isomerase family. As to quaternary structure, homodimer.

It carries out the reaction aldehydo-D-ribose 5-phosphate = D-ribulose 5-phosphate. It participates in carbohydrate degradation; pentose phosphate pathway; D-ribose 5-phosphate from D-ribulose 5-phosphate (non-oxidative stage): step 1/1. Catalyzes the reversible conversion of ribose-5-phosphate to ribulose 5-phosphate. The chain is Ribose-5-phosphate isomerase A from Cupriavidus pinatubonensis (strain JMP 134 / LMG 1197) (Cupriavidus necator (strain JMP 134)).